Reading from the N-terminus, the 253-residue chain is Sulfate transporter CysZ (253 aa).

4 helical membrane passes run 31–51, 72–92, 151–171, and 222–242; these read FVILPLLVNIVLMGGAFWWLF, LSYLLWPIAVISVLLVFGYFF, IVLLVLYFIPGIGQTIAPVLW, and IPVLNLFIMPVAVCGATAMWV.

This sequence belongs to the CysZ family.

The protein localises to the cell inner membrane. Functionally, high affinity, high specificity proton-dependent sulfate transporter, which mediates sulfate uptake. Provides the sulfur source for the cysteine synthesis pathway. In Salmonella paratyphi A (strain AKU_12601), this protein is Sulfate transporter CysZ.